The sequence spans 466 residues: Serine/threonine-protein kinase SSN3 (466 aa).

The 365-residue stretch at 32–396 folds into the Protein kinase domain; the sequence is YKILGFISSG…ARDALRHPWF (365 aa). Residue 38–46 participates in ATP binding; the sequence is ISSGTYGRV. Residues 58 to 105 form a disordered region; it reads ASAKSALPSSTRAALSLPKDKLPSPSFTEDSDPLNNPEMCMRPGDRPA. Lys114 is an ATP binding site. Asp216 acts as the Proton acceptor in catalysis. The segment at 421–466 is disordered; it reads THEDNGDAKMGSLPQSMAGGRLPSSSNFRPASGNIVQPAARKKARI.

The protein belongs to the protein kinase superfamily. CMGC Ser/Thr protein kinase family. CDC2/CDKX subfamily. In terms of assembly, component of the SRB8-11 complex, a regulatory module of the Mediator complex. Requires Mg(2+) as cofactor.

It localises to the nucleus. It carries out the reaction L-seryl-[protein] + ATP = O-phospho-L-seryl-[protein] + ADP + H(+). It catalyses the reaction L-threonyl-[protein] + ATP = O-phospho-L-threonyl-[protein] + ADP + H(+). The enzyme catalyses [DNA-directed RNA polymerase] + ATP = phospho-[DNA-directed RNA polymerase] + ADP + H(+). Functionally, component of the SRB8-11 complex. The SRB8-11 complex is a regulatory module of the Mediator complex which is itself involved in regulation of basal and activated RNA polymerase II-dependent transcription. The SRB8-11 complex may be involved in the transcriptional repression of a subset of genes regulated by Mediator. It may inhibit the association of the Mediator complex with RNA polymerase II to form the holoenzyme complex. The SRB8-11 complex phosphorylates the C-terminal domain (CTD) of the largest subunit of RNA polymerase II. This Cryptococcus neoformans var. neoformans serotype D (strain B-3501A) (Filobasidiella neoformans) protein is Serine/threonine-protein kinase SSN3 (SSN3).